Here is a 138-residue protein sequence, read N- to C-terminus: Small ribosomal subunit protein uS11c (138 aa).

The tract at residues 1–23 (MKKPIPRIGSRRNGRIGSRKNGR) is disordered.

Belongs to the universal ribosomal protein uS11 family. Part of the 30S ribosomal subunit.

It is found in the plastid. It localises to the chloroplast. The polypeptide is Small ribosomal subunit protein uS11c (Amborella trichopoda).